A 180-amino-acid polypeptide reads, in one-letter code: Large ribosomal subunit protein uL6 (180 aa).

This sequence belongs to the universal ribosomal protein uL6 family. As to quaternary structure, part of the 50S ribosomal subunit.

In terms of biological role, this protein binds to the 23S rRNA, and is important in its secondary structure. It is located near the subunit interface in the base of the L7/L12 stalk, and near the tRNA binding site of the peptidyltransferase center. The chain is Large ribosomal subunit protein uL6 from Anaeromyxobacter dehalogenans (strain 2CP-1 / ATCC BAA-258).